Consider the following 92-residue polypeptide: MARSVKKGPFLDDFLVKKVDVLREGSRKELIKTWSRRSTIIHEFVGYTFGVHNGRKFIPVLVTENMVGHKLGEFAPTRTYYGHGVDKKAKRR.

Belongs to the universal ribosomal protein uS19 family.

Functionally, protein S19 forms a complex with S13 that binds strongly to the 16S ribosomal RNA. The sequence is that of Small ribosomal subunit protein uS19 from Magnetococcus marinus (strain ATCC BAA-1437 / JCM 17883 / MC-1).